The primary structure comprises 315 residues: Methenyltetrahydromethanopterin cyclohydrolase (315 aa).

The protein belongs to the MCH family.

The protein localises to the cytoplasm. It catalyses the reaction 5,10-methenyl-5,6,7,8-tetrahydromethanopterin + H2O = N(5)-formyl-5,6,7,8-tetrahydromethanopterin + H(+). Its pathway is one-carbon metabolism; methanogenesis from CO(2); 5,10-methenyl-5,6,7,8-tetrahydromethanopterin from CO(2): step 3/3. Its function is as follows. Catalyzes the reversible interconversion of 5-formyl-H(4)MPT to methenyl-H(4)MPT(+). In Methanosphaerula palustris (strain ATCC BAA-1556 / DSM 19958 / E1-9c), this protein is Methenyltetrahydromethanopterin cyclohydrolase.